We begin with the raw amino-acid sequence, 659 residues long: Serine/threonine-protein kinase StkP (659 aa).

The Cytoplasmic portion of the chain corresponds to 1 to 342; that stretch reads MIQIGKIFAG…PQAPKKHRFK (342 aa). A Protein kinase domain is found at 12 to 273; it reads YRIVKQIGRG…EMYVDLSSSL (262 aa). ATP is bound by residues 18–26 and K42; that span reads IGRGGMADV. The active-site Proton acceptor is the D136. The chain crosses the membrane as a helical span at residues 343 to 363; the sequence is MRYLILLASLVLVAASLIWIL. Topologically, residues 364–659 are extracellular; it reads SRTPATIAIP…YKPKTTSATP (296 aa). PASTA domains lie at 366 to 433, 434 to 505, 506 to 577, and 578 to 651; these read TPAT…VVSS, GKQS…TVAK, KATT…TVAK, and KVTS…SIYK. Residues 541–561 form a disordered region; it reads EEESSESEPGTIMKQSPGAGT.

This sequence belongs to the protein kinase superfamily. Ser/Thr protein kinase family. Homodimer. StkP forms dimers through its transmembrane and extracellular domains. Dimer formation likely promotes autophosphorylation activity and might be necessary for targeting StkP substrate. Autophosphorylation occurs predominantly at the threonine residue and weakly at the serine residue. Dephosphorylated by PhpP.

It is found in the cell membrane. It catalyses the reaction L-seryl-[protein] + ATP = O-phospho-L-seryl-[protein] + ADP + H(+). It carries out the reaction L-threonyl-[protein] + ATP = O-phospho-L-threonyl-[protein] + ADP + H(+). Protein kinase involved in signal transduction pathways that regulate various cellular processes. Likely senses intracellular peptidoglycan subunits present in the cell division septa of actively growing cells; thus, intracellular unlinked peptidoglycan may serve as the signal molecules that trigger StkP phosphorylation activity on a set of substrates. Plays a crucial role in the regulation of cell shape and cell division of S.pneumoniae through control of at least DivIVA activity. Is involved in competence triggering, and is required for the expression of the central competence operon comCDE. StkP also plays an important role for bacterial survival in vivo. Identified target substrates that are specifically phosphorylated by StkP in vivo, mainly on threonine residues, are DivIVA, GlmM, PpaC, MapZ, KhpB (also called EloR/Jag, shown in strains R6 and Rx1) and StkP itself. Autophosphorylated StkP is a substrate for the cotranscribed protein phosphatase PhpP (shown in the avirulent strain Rx / Cp1015); PhpP and StkP appear to constitute a functional signaling couple in vivo. The sequence is that of Serine/threonine-protein kinase StkP (stkP) from Streptococcus pneumoniae serotype 2 (strain D39 / NCTC 7466).